Here is an 839-residue protein sequence, read N- to C-terminus: Protein translocase subunit SecA (839 aa).

Residues Gln-85, 103–107, and Asp-493 each bind ATP; that span reads GEGKT. Positions 780-790 are enriched in basic and acidic residues; it reads QIHEQERERAS. The segment at 780 to 839 is disordered; the sequence is QIHEQERERASQRATTAAPQNIQSQQSANTDDLPKVERNEACPCGSGKKFKNCHGRKSFS. Over residues 791–809 the composition is skewed to polar residues; it reads QRATTAAPQNIQSQQSANT. Zn(2+) is bound by residues Cys-821, Cys-823, Cys-832, and His-833. Over residues 827–839 the composition is skewed to basic residues; that stretch reads KKFKNCHGRKSFS.

It belongs to the SecA family. As to quaternary structure, monomer and homodimer. Part of the essential Sec protein translocation apparatus which comprises SecA, SecYEG and auxiliary proteins SecDF. Other proteins may also be involved. Zn(2+) is required as a cofactor.

It localises to the cell membrane. Its subcellular location is the cytoplasm. The catalysed reaction is ATP + H2O + cellular proteinSide 1 = ADP + phosphate + cellular proteinSide 2.. Part of the Sec protein translocase complex. Interacts with the SecYEG preprotein conducting channel. Has a central role in coupling the hydrolysis of ATP to the transfer of proteins into and across the cell membrane, serving as an ATP-driven molecular motor driving the stepwise translocation of polypeptide chains across the membrane. This is Protein translocase subunit SecA from Streptococcus pyogenes serotype M1.